A 186-amino-acid polypeptide reads, in one-letter code: Nicotinamide-nucleotide adenylyltransferase (186 aa).

Belongs to the archaeal NMN adenylyltransferase family.

It localises to the cytoplasm. It catalyses the reaction beta-nicotinamide D-ribonucleotide + ATP + H(+) = diphosphate + NAD(+). Its pathway is cofactor biosynthesis; NAD(+) biosynthesis; NAD(+) from nicotinamide D-ribonucleotide: step 1/1. The sequence is that of Nicotinamide-nucleotide adenylyltransferase from Pyrococcus abyssi (strain GE5 / Orsay).